A 255-amino-acid chain; its full sequence is tRNA (guanine-N(1)-)-methyltransferase (255 aa).

Residues G117 and L137–L142 each bind S-adenosyl-L-methionine.

Belongs to the RNA methyltransferase TrmD family. In terms of assembly, homodimer.

It localises to the cytoplasm. The catalysed reaction is guanosine(37) in tRNA + S-adenosyl-L-methionine = N(1)-methylguanosine(37) in tRNA + S-adenosyl-L-homocysteine + H(+). Specifically methylates guanosine-37 in various tRNAs. In Paraburkholderia phymatum (strain DSM 17167 / CIP 108236 / LMG 21445 / STM815) (Burkholderia phymatum), this protein is tRNA (guanine-N(1)-)-methyltransferase.